The chain runs to 336 residues: Anthranilate phosphoribosyltransferase (336 aa).

5-phospho-alpha-D-ribose 1-diphosphate is bound by residues G79, 82 to 83 (GD), T87, 89 to 92 (NIST), 107 to 115 (KHGNRAMSS), and S119. Position 79 (G79) interacts with anthranilate. S91 is a binding site for Mg(2+). N110 provides a ligand contact to anthranilate. R165 serves as a coordination point for anthranilate. Residues D225 and E226 each coordinate Mg(2+).

Belongs to the anthranilate phosphoribosyltransferase family. As to quaternary structure, homodimer. Mg(2+) is required as a cofactor.

The catalysed reaction is N-(5-phospho-beta-D-ribosyl)anthranilate + diphosphate = 5-phospho-alpha-D-ribose 1-diphosphate + anthranilate. It participates in amino-acid biosynthesis; L-tryptophan biosynthesis; L-tryptophan from chorismate: step 2/5. Functionally, catalyzes the transfer of the phosphoribosyl group of 5-phosphorylribose-1-pyrophosphate (PRPP) to anthranilate to yield N-(5'-phosphoribosyl)-anthranilate (PRA). The protein is Anthranilate phosphoribosyltransferase of Dictyoglomus turgidum (strain DSM 6724 / Z-1310).